Here is a 318-residue protein sequence, read N- to C-terminus: uncharacterized protein (318 aa).

This is an uncharacterized protein from Ostreid herpesvirus 1 (isolate France) (OsHV-1).